A 97-amino-acid polypeptide reads, in one-letter code: Prophage lipoprotein Bor homolog (97 aa).

The first 16 residues, 1 to 16 (MKKMLLATALALLITG), serve as a signal peptide directing secretion. Cys-17 carries the N-palmitoyl cysteine lipid modification. The S-diacylglycerol cysteine moiety is linked to residue Cys-17.

This sequence belongs to the lambda phage bor family.

The protein resides in the cell membrane. This Escherichia coli (strain K12) protein is Prophage lipoprotein Bor homolog (borD).